Here is a 151-residue protein sequence, read N- to C-terminus: D-aminoacyl-tRNA deacylase (151 aa).

The Gly-cisPro motif, important for rejection of L-amino acids signature appears at 136–137 (GP).

The protein belongs to the DTD family. In terms of assembly, homodimer.

It localises to the cytoplasm. The catalysed reaction is glycyl-tRNA(Ala) + H2O = tRNA(Ala) + glycine + H(+). It catalyses the reaction a D-aminoacyl-tRNA + H2O = a tRNA + a D-alpha-amino acid + H(+). Functionally, an aminoacyl-tRNA editing enzyme that deacylates mischarged D-aminoacyl-tRNAs. Also deacylates mischarged glycyl-tRNA(Ala), protecting cells against glycine mischarging by AlaRS. Acts via tRNA-based rather than protein-based catalysis; rejects L-amino acids rather than detecting D-amino acids in the active site. By recycling D-aminoacyl-tRNA to D-amino acids and free tRNA molecules, this enzyme counteracts the toxicity associated with the formation of D-aminoacyl-tRNA entities in vivo and helps enforce protein L-homochirality. The sequence is that of D-aminoacyl-tRNA deacylase from Streptococcus gordonii (strain Challis / ATCC 35105 / BCRC 15272 / CH1 / DL1 / V288).